Reading from the N-terminus, the 324-residue chain is Autolytic lysozyme (324 aa).

Active-site residues include Asp-5 and Glu-91. Tandem repeats lie at residues 212–234 (LLKR…IKDF), 235–254 (QSIM…SGAA), 255–277 (QQIF…TRYI), 278–300 (QYRV…VAAW), and 301–324 (QSNQ…LDEN). Positions 212 to 324 (LLKRGLEVDG…ATWSKLLDEN (113 aa)) are 5 X 23 AA tandem repeats.

It belongs to the glycosyl hydrolase 25 family. As to quaternary structure, monomer.

Its subcellular location is the secreted. The protein resides in the cytoplasm. It catalyses the reaction Hydrolysis of (1-&gt;4)-beta-linkages between N-acetylmuramic acid and N-acetyl-D-glucosamine residues in a peptidoglycan and between N-acetyl-D-glucosamine residues in chitodextrins.. This Clostridium acetobutylicum (strain ATCC 824 / DSM 792 / JCM 1419 / IAM 19013 / LMG 5710 / NBRC 13948 / NRRL B-527 / VKM B-1787 / 2291 / W) protein is Autolytic lysozyme (lyc).